The chain runs to 75 residues: uncharacterized protein (75 aa).

It belongs to the HSBP1 family.

This is an uncharacterized protein from Schizosaccharomyces pombe (strain 972 / ATCC 24843) (Fission yeast).